A 236-amino-acid chain; its full sequence is Small ribosomal subunit protein uS2c (236 aa).

This sequence belongs to the universal ribosomal protein uS2 family.

Its subcellular location is the plastid. It is found in the chloroplast. The sequence is that of Small ribosomal subunit protein uS2c (rps2) from Pisum sativum (Garden pea).